The chain runs to 1642 residues: Coiled-coil domain-containing protein 7A (1642 aa).

Positions 21 to 51 (PYKKGLLNSSPKPKEKHNAKSKYGKNESMVL) are disordered. One copy of the LRR 1 repeat lies at 161–184 (VNQMEEISKDQSNLEELQSDGKTA). Positions 279–330 (LEKALNDQQTIESKYKQLETDFQMLIMEKTLLEAEIRRLREIERVKSAAKEE) form a coiled coil. One copy of the LRR 2 repeat lies at 1310–1333 (IKELSKTLNLDGGDIELSDFVFKT).

As to expression, exclusively expressed in the testes.

This chain is Coiled-coil domain-containing protein 7A, found in Mus musculus (Mouse).